Consider the following 321-residue polypeptide: Citrate synthase (321 aa).

Catalysis depends on residues H248 and D306.

It belongs to the citrate synthase family.

It carries out the reaction oxaloacetate + acetyl-CoA + H2O = citrate + CoA + H(+). It functions in the pathway carbohydrate metabolism; tricarboxylic acid cycle; isocitrate from oxaloacetate: step 1/2. The sequence is that of Citrate synthase (gltA) from Bartonella elizabethae (Rochalimaea elizabethae).